Here is a 779-residue protein sequence, read N- to C-terminus: Endonuclease MutS2 (779 aa).

Residue 328 to 335 (GPNTGGKT) coordinates ATP. Residues 704 to 779 (LDLRGKRYEE…GSGATIVTLG (76 aa)) form the Smr domain.

This sequence belongs to the DNA mismatch repair MutS family. MutS2 subfamily. As to quaternary structure, homodimer. Binds to stalled ribosomes, contacting rRNA.

In terms of biological role, endonuclease that is involved in the suppression of homologous recombination and thus may have a key role in the control of bacterial genetic diversity. Acts as a ribosome collision sensor, splitting the ribosome into its 2 subunits. Detects stalled/collided 70S ribosomes which it binds and splits by an ATP-hydrolysis driven conformational change. Acts upstream of the ribosome quality control system (RQC), a ribosome-associated complex that mediates the extraction of incompletely synthesized nascent chains from stalled ribosomes and their subsequent degradation. Probably generates substrates for RQC. The sequence is that of Endonuclease MutS2 from Streptococcus pyogenes serotype M1.